The sequence spans 123 residues: Small ribosomal subunit protein uS12c (123 aa).

It belongs to the universal ribosomal protein uS12 family. As to quaternary structure, part of the 30S ribosomal subunit.

It localises to the plastid. It is found in the chloroplast. Functionally, with S4 and S5 plays an important role in translational accuracy. Located at the interface of the 30S and 50S subunits. This is Small ribosomal subunit protein uS12c (rps12) from Pinus thunbergii (Japanese black pine).